Consider the following 127-residue polypeptide: Aspartate 1-decarboxylase (127 aa).

Residue serine 25 is the Schiff-base intermediate with substrate; via pyruvic acid of the active site. The residue at position 25 (serine 25) is a Pyruvic acid (Ser). Threonine 57 contributes to the substrate binding site. Tyrosine 58 acts as the Proton donor in catalysis. A substrate-binding site is contributed by 73–75; sequence GAA.

This sequence belongs to the PanD family. In terms of assembly, heterooctamer of four alpha and four beta subunits. The cofactor is pyruvate. Is synthesized initially as an inactive proenzyme, which is activated by self-cleavage at a specific serine bond to produce a beta-subunit with a hydroxyl group at its C-terminus and an alpha-subunit with a pyruvoyl group at its N-terminus.

It is found in the cytoplasm. It carries out the reaction L-aspartate + H(+) = beta-alanine + CO2. It participates in cofactor biosynthesis; (R)-pantothenate biosynthesis; beta-alanine from L-aspartate: step 1/1. Functionally, catalyzes the pyruvoyl-dependent decarboxylation of aspartate to produce beta-alanine. This chain is Aspartate 1-decarboxylase, found in Neisseria meningitidis serogroup C / serotype 2a (strain ATCC 700532 / DSM 15464 / FAM18).